Consider the following 641-residue polypeptide: tRNA 5-methylaminomethyl-2-thiouridine biosynthesis bifunctional protein MnmC (641 aa).

The tract at residues M1–T219 is tRNA (mnm(5)s(2)U34)-methyltransferase. Positions I232–V641 are FAD-dependent cmnm(5)s(2)U34 oxidoreductase.

The protein in the N-terminal section; belongs to the methyltransferase superfamily. tRNA (mnm(5)s(2)U34)-methyltransferase family. In the C-terminal section; belongs to the DAO family. FAD serves as cofactor.

It localises to the cytoplasm. It carries out the reaction 5-aminomethyl-2-thiouridine(34) in tRNA + S-adenosyl-L-methionine = 5-methylaminomethyl-2-thiouridine(34) in tRNA + S-adenosyl-L-homocysteine + H(+). Catalyzes the last two steps in the biosynthesis of 5-methylaminomethyl-2-thiouridine (mnm(5)s(2)U) at the wobble position (U34) in tRNA. Catalyzes the FAD-dependent demodification of cmnm(5)s(2)U34 to nm(5)s(2)U34, followed by the transfer of a methyl group from S-adenosyl-L-methionine to nm(5)s(2)U34, to form mnm(5)s(2)U34. This Shewanella pealeana (strain ATCC 700345 / ANG-SQ1) protein is tRNA 5-methylaminomethyl-2-thiouridine biosynthesis bifunctional protein MnmC.